A 289-amino-acid chain; its full sequence is ATP synthase gamma chain (289 aa).

It belongs to the ATPase gamma chain family. As to quaternary structure, F-type ATPases have 2 components, CF(1) - the catalytic core - and CF(0) - the membrane proton channel. CF(1) has five subunits: alpha(3), beta(3), gamma(1), delta(1), epsilon(1). CF(0) has three main subunits: a, b and c.

The protein resides in the cell inner membrane. Functionally, produces ATP from ADP in the presence of a proton gradient across the membrane. The gamma chain is believed to be important in regulating ATPase activity and the flow of protons through the CF(0) complex. In Azorhizobium caulinodans (strain ATCC 43989 / DSM 5975 / JCM 20966 / LMG 6465 / NBRC 14845 / NCIMB 13405 / ORS 571), this protein is ATP synthase gamma chain.